The primary structure comprises 517 residues: Ribonuclease Y (517 aa).

The chain crosses the membrane as a helical span at residues 1 to 21 (MIESLIALIAAIVGLGIGYLV). Positions 207 to 273 (LINVINIKND…TKVIELLVED (67 aa)) constitute a KH domain. Residues 333-426 (ALAHSLEVAH…VCAADTLSAA (94 aa)) form the HD domain.

Belongs to the RNase Y family.

The protein localises to the cell membrane. Endoribonuclease that initiates mRNA decay. The chain is Ribonuclease Y from Campylobacter jejuni subsp. doylei (strain ATCC BAA-1458 / RM4099 / 269.97).